A 514-amino-acid polypeptide reads, in one-letter code: MRLEVFCEDRLGLTRELLDLLVLRSIDLRGIEIDPIGRIYLNFAELEFTNFSSLMAEIRRISGVTDVRTVPWMPSEREHLALSALLEALPEPVLSLDMKSKIEMANPASCQLFAHTQDRMRNHTAAQLINGFNFQRWLESNPQDSHSEHVVINGQNFLMEITPVHLQGENQEQMLTGAVVMLRSTIRMGRQLQNMTTQDLSAFSQIIAVSAKMKHVVEQARKLATLSAPLLITGNTGTGKDLFAHACHLASPRASKPYLALNCASIPEDAVESELFGHAPEGKKGFFEQANGGSVLLDEIGEMSPRMQTKLLRFLNDGTFRRVGEDHEVHVDVRVICATQKNLVEMVQKGLFREDLYYRLNVLTLNLPPLRDLPADIMPLTELFVARFADEQGVPRPKLSADLSTVLTRYGWPGNVRHVKNAIYRALTQLEGYELRPQDILLPDYDAATVAVGEEVMEGSLDEITSRFERSVLTQLYMNYPSTRKLAKRLGVSHTAIANKLREYGLSQQKKSEE.

The 71-residue stretch at 2–72 (RLEVFCEDRL…GVTDVRTVPW (71 aa)) folds into the ACT domain. In terms of domain architecture, PAS spans 78–120 (EHLALSALLEALPEPVLSLDMKSKIEMANPASCQLFAHTQDRM). Positions 206-428 (IIAVSAKMKH…VKNAIYRALT (223 aa)) constitute a Sigma-54 factor interaction domain. Residues 234–241 (GNTGTGKD) and 290–299 (ANGGSVLLDE) each bind ATP. The H-T-H motif DNA-binding region spans 482 to 502 (STRKLAKRLGVSHTAIANKLR).

In terms of assembly, homodimer. In presence of tyrosine (or high concentrations of phenylalanine or tryptophan) and ATP, it self-associates to form an hexamer.

The protein localises to the cytoplasm. In terms of biological role, dual transcriptional regulator of the TyrR regulon, which includes a number of genes coding for proteins involved in the biosynthesis or transport of the three aromatic amino acids, phenylalanine, tyrosine and tryptophan. These three aromatic amino acids act as effectors which bind to the TyrR protein to form an active regulatory protein. Acts by binding specifically to TyrR boxes in the promoter region of the target genes. The chain is HTH-type transcriptional regulatory protein TyrR from Citrobacter braakii.